Reading from the N-terminus, the 125-residue chain is Small ribosomal subunit protein uS12c (125 aa).

Belongs to the universal ribosomal protein uS12 family. As to quaternary structure, part of the 30S ribosomal subunit.

Its subcellular location is the plastid. It localises to the chloroplast. With S4 and S5 plays an important role in translational accuracy. Located at the interface of the 30S and 50S subunits. The chain is Small ribosomal subunit protein uS12c (rps12) from Nephroselmis olivacea (Green alga).